The chain runs to 500 residues: Lysine--tRNA ligase (500 aa).

Glu410 and Glu417 together coordinate Mg(2+).

This sequence belongs to the class-II aminoacyl-tRNA synthetase family. In terms of assembly, homodimer. The cofactor is Mg(2+).

The protein localises to the cytoplasm. The catalysed reaction is tRNA(Lys) + L-lysine + ATP = L-lysyl-tRNA(Lys) + AMP + diphosphate. The protein is Lysine--tRNA ligase of Mycoplasma capricolum subsp. capricolum (strain California kid / ATCC 27343 / NCTC 10154).